Here is a 231-residue protein sequence, read N- to C-terminus: MKIKAISLDIDGTITYPNRMIHEEALQAIRKAESLGVPIMLVTGNTVQFAEAASILIGTSGPVVAEDGGAISYKKKRIFLTSMDEEWILWGELKKRFPNVKTSHTMPDRRAGLVIMRETIDVETVRKLIKELNLNLVAVDSGFAIHVKKPWINKGSGIEKACELLGLNPKEVAHVGDGENDLDAFKVVGYRIAVAQAPKILKENADYITQNEYGKGGAEAIYHILEKFGYI.

Asp9 serves as the catalytic Nucleophile. Residues Asp9 and Asp11 each coordinate Mg(2+). Lys154 serves as a coordination point for substrate. Mg(2+) contacts are provided by Asp177 and Asp181.

Belongs to the archaeal SPP-like hydrolase family. The cofactor is Mg(2+).

It catalyses the reaction 2-phosphoglycolate + H2O = glycolate + phosphate. Its function is as follows. Catalyzes the dephosphorylation of 2-phosphoglycolate. In Pyrococcus furiosus (strain ATCC 43587 / DSM 3638 / JCM 8422 / Vc1), this protein is Phosphoglycolate phosphatase.